A 37-amino-acid polypeptide reads, in one-letter code: Alpha-conotoxin TxID (37 aa).

Positions 1-21 are excised as a propeptide; it reads FDGRNAAGNDKMSALMALTTR. Disulfide bonds link Cys-23/Cys-29 and Cys-24/Cys-36. Cys-36 carries the cysteine amide modification.

The protein belongs to the conotoxin A superfamily. Unmodified Met-32 is essential for toxin binding to rat alpha-3-beta-4/CHRNA3-CHRNB4 nAChR. An oxidation of this methionine provokes a 13.3-fold decrease in inhibitory potency (IC(50)=245 nM instead of 18 nM). Owing to its potent activity, derivatives of this toxin have a potential in the development of a novel drug. Unfortunately, the oxidation of the methionine is readily to happen during toxin synthesis and oxidation steps as well as under oxidative environment in vivo, which should still be considered to find a solution to this major drawback. In terms of tissue distribution, expressed by the venom duct.

The protein localises to the secreted. Functionally, alpha-conotoxins act on postsynaptic membranes, they bind to the nicotinic acetylcholine receptors (nAChR) and thus inhibit them. This toxin inhibits alpha-3-beta-4/CHRNA3-CHRNB4 (IC(50)=3.6-18.38 nM), alpha-6/alpha-3-beta-4 (CHRNA6/CHRNA3-CHRNB4) (IC(50)=33.9-94.1 nM), and alpha-2-beta-4/CHRNA2-CHRNB4 (IC(50)=4550 nM) nAChRs. The toxin competes with agonists in the orthosteric binding site of alpha-3-beta-4/CHRNA3-CHRNB4 and alpha-6-beta-4/CHRNA6-CHRNB4. This Conus textile (Cloth-of-gold cone) protein is Alpha-conotoxin TxID.